The chain runs to 195 residues: Probable GTP-binding protein EngB (195 aa).

The region spanning 24–195 (GLKEVALAGR…MIFNAIEKYL (172 aa)) is the EngB-type G domain. Residues 32–39 (GRSNVGKS), 59–63 (GKTQT), 77–80 (DVPG), 144–147 (TKED), and 176–178 (YTA) each bind GTP. Mg(2+)-binding residues include serine 39 and threonine 61.

This sequence belongs to the TRAFAC class TrmE-Era-EngA-EngB-Septin-like GTPase superfamily. EngB GTPase family. It depends on Mg(2+) as a cofactor.

Necessary for normal cell division and for the maintenance of normal septation. The polypeptide is Probable GTP-binding protein EngB (Macrococcus caseolyticus (strain JCSC5402) (Macrococcoides caseolyticum)).